A 305-amino-acid polypeptide reads, in one-letter code: MWFGRDVISARDFSREDLYELFEMAKYMEKFAKSRVDFLRGKVMATAFFEPSTRTRLSFEVAMKRLGGDVIGFGSAEGTSVEKGETLADTIRMLDAYADVIVIRHKYEGAAKLAAEVAESPVVNGGDGAYNHPTQAMLDVYTIWREFGHVDGLNVGLMGDLRNARTINSLVETLANFNVRLYFISPEFLRPRAETVDYARDKGVKMSFHTNVEEVVHELDVLYVVRIQKERFLDPLEYERVKGSYRVTLELLKNAKRGLIVLHPLPRVDEIDHRIDSTPHAKYFIQAALGVPLRMALIYLILSPP.

Carbamoyl phosphate contacts are provided by R54 and T55. K83 is an L-aspartate binding site. Residues R104, H132, and Q135 each contribute to the carbamoyl phosphate site. Residues R165 and R226 each contribute to the L-aspartate site. Positions 265 and 266 each coordinate carbamoyl phosphate.

The protein belongs to the aspartate/ornithine carbamoyltransferase superfamily. ATCase family. In terms of assembly, heterooligomer of catalytic and regulatory chains.

The enzyme catalyses carbamoyl phosphate + L-aspartate = N-carbamoyl-L-aspartate + phosphate + H(+). The protein operates within pyrimidine metabolism; UMP biosynthesis via de novo pathway; (S)-dihydroorotate from bicarbonate: step 2/3. Catalyzes the condensation of carbamoyl phosphate and aspartate to form carbamoyl aspartate and inorganic phosphate, the committed step in the de novo pyrimidine nucleotide biosynthesis pathway. The polypeptide is Aspartate carbamoyltransferase catalytic subunit (Pyrobaculum calidifontis (strain DSM 21063 / JCM 11548 / VA1)).